A 327-amino-acid chain; its full sequence is Fructose import binding protein FruE (327 aa).

The signal sequence occupies residues 1-22 (MKNWKKAIALVASAAALVSVAA). Residue C23 is the site of N-palmitoyl cysteine attachment. The S-diacylglycerol cysteine moiety is linked to residue C23.

It belongs to the bacterial solute-binding protein 2 family. As to quaternary structure, the complex is composed of an ATP-binding protein (FruK), two transmembrane proteins (FruF and FruG) and a solute-binding protein (FruE).

Its subcellular location is the cell membrane. Functionally, part of the high-affinity ABC transporter complex FruEKFG involved in fructose uptake. Can also transport ribose and xylose, with lower affinity. Binds fructose, ribose and xylose, with fructose as the preferred substrate. The sequence is that of Fructose import binding protein FruE from Bifidobacterium longum (strain NCC 2705).